Here is a 2475-residue protein sequence, read N- to C-terminus: Polyprotein pp220 (2475 aa).

The N-myristoyl glycine; by host moiety is linked to residue G2. Residues 2185–2212 adopt a coiled-coil conformation; it reads KNQLIADLAAIREQLVRMRREVENMVQT.

This sequence belongs to the asfivirus polyprotein pp220 family. Post-translationally, the polyprotein is not glycosylated. In terms of processing, specific enzymatic cleavages in vivo by the viral pS273R protease yield mature proteins.

The protein resides in the host cytoplasm. It localises to the host perinuclear region. It is found in the virion. The protein localises to the host nucleus. In terms of biological role, essential for the core assembly. Its myristoyl moiety may function as a membrane-anchoring signal to bind the developing core shell to the inner viral envelope. Its function is as follows. The structural protein p34 is a component of the virus core shell. The structural protein p14 is a component of the virus core shell. Functionally, the structural protein p37 is a component of the virus core shell. In terms of biological role, the structural protein p150 is a component of the virus core shell. This chain is Polyprotein pp220, found in African swine fever virus (isolate Pig/Kenya/KEN-50/1950) (ASFV).